The following is a 2958-amino-acid chain: Protein CSF1 (2958 aa).

Residues 1–17 are Cytoplasmic-facing; it reads MEAISQLRGVPLTHQKD. Residues 18 to 38 form a helical; Signal-anchor for type II membrane protein membrane-spanning segment; that stretch reads FSWVFLVDWILTVVVCLTMIF. Topologically, residues 39–2958 are extracellular; sequence YMGRIYAYLV…QYVKILDDTH (2920 aa). Asn-82, Asn-117, Asn-144, Asn-271, Asn-478, Asn-530, Asn-816, Asn-821, Asn-839, and Asn-892 each carry an N-linked (GlcNAc...) asparagine glycan. Positions 813–834 are disordered; that stretch reads GYQNSSLKNESEDKGPMKRSDL. Positions 821-834 are enriched in basic and acidic residues; it reads NESEDKGPMKRSDL. Residues 1175–1196 form a disordered region; the sequence is MEPSRASFSEDDNDEEADPSSF. Over residues 1183 to 1192 the composition is skewed to acidic residues; that stretch reads SEDDNDEEAD. Residues Asn-1309, Asn-1368, Asn-1453, Asn-1785, Asn-1921, Asn-2130, Asn-2146, Asn-2280, Asn-2337, Asn-2520, Asn-2578, Asn-2719, and Asn-2869 are each glycosylated (N-linked (GlcNAc...) asparagine).

The protein belongs to the CSF1 family. In terms of assembly, interacts with MCD4; CSF1 channels phosphatidylethanolamine to MCD4 in the endoplasmic reticulum at contact sites to support GPI anchor biosynthesis.

It is found in the cell membrane. The protein resides in the endoplasmic reticulum membrane. Its subcellular location is the mitochondrion membrane. Tube-forming lipid transport protein which provides phosphatidylethanolamine for glycosylphosphatidylinositol (GPI) anchor synthesis in the endoplasmic reticulum. Required for the glucose and other nutrients uptake at low temperature. This Saccharomyces cerevisiae (strain ATCC 204508 / S288c) (Baker's yeast) protein is Protein CSF1.